A 406-amino-acid chain; its full sequence is Endoplasmic reticulum resident protein 44 (406 aa).

The N-terminal stretch at 1–29 is a signal peptide; it reads MHPAVFLSLPDLRCSLLLLVTWVFTPVTT. In terms of domain architecture, Thioredoxin spans 30 to 138; sequence EITSLDTENI…VKALADYIRQ (109 aa). Disulfide bonds link cysteine 189-cysteine 241 and cysteine 301-cysteine 318. Residues 236–285 are interaction with ITPR1; the sequence is WIQDKCVPLVREITFENGEELTEEGLPFLILFHMKEDTESLEIFQNEVAR. The interval 360-387 is disordered; sequence FHHGPDPTDTAPGEQAQDVASSPPESSF. A compositionally biased stretch (polar residues) spans 377–387; it reads DVASSPPESSF. A Prevents secretion from ER motif is present at residues 403-406; it reads RDEL.

As to quaternary structure, forms mixed disulfides with both ERO1A and ERO1B and cargo folding intermediates; the interactions with ERO1A and ERO1B result in their retention in the endoplasmic reticulum. Directly interacts with ITPR1 in a pH-, redox state- and calcium-dependent manner, but not with ITPR2 or ITPR3. The strength of this interaction inversely correlates with calcium concentration.

The protein localises to the endoplasmic reticulum lumen. In terms of biological role, mediates thiol-dependent retention in the early secretory pathway, forming mixed disulfides with substrate proteins through its conserved CRFS motif. Inhibits the calcium channel activity of ITPR1. May have a role in the control of oxidative protein folding in the endoplasmic reticulum. Required to retain ERO1A and ERO1B in the endoplasmic reticulum. The protein is Endoplasmic reticulum resident protein 44 (ERP44) of Homo sapiens (Human).